Here is a 611-residue protein sequence, read N- to C-terminus: Adenosylhomocysteinase 3 (611 aa).

3 stretches are compositionally biased toward low complexity: residues 1-14 (MSVQVVSAAAAAKV), 36-57 (AAVGAMAPPAGGGDPEAPAPAA), and 68-81 (GPAAALSPAAGKVP). Positions 1-184 (MSVQVVSAAA…KQQKNSKGSS (184 aa)) are disordered. N-acetylserine is present on serine 2. The interval 2–109 (SVQVVSAAAA…DGGEALVSPD (108 aa)) is LISN domain, inhibits interaction with ITPR1. A Phosphoserine modification is found at serine 107. The span at 135-144 (RPTKIGRRSL) shows a compositional bias: basic residues. A compositionally biased stretch (low complexity) spans 145–164 (SRSISQSSTDSYSSAASYTD). A phosphoserine mark is found at serine 149, serine 152, serine 155, and serine 158. Residues threonine 236, aspartate 310, and glutamate 335 each contribute to the substrate site. Residue 336-338 (SVT) participates in NAD(+) binding. Lysine 365 and aspartate 369 together coordinate substrate. NAD(+) contacts are provided by residues asparagine 370, 401–406 (GEVGKG), glutamate 422, asparagine 457, 478–479 (MG), and asparagine 525.

This sequence belongs to the adenosylhomocysteinase family. In terms of assembly, homotetramer. Forms heteromultimers with AHCYL1 (via the C-terminal region). Interacts with ITPR1; with lower affinity than AHCYL1 and maybe via ITPR1. Interacts with SLC4A4. Interacts with ZCCHC4. NAD(+) serves as cofactor. In terms of processing, phosphorylated during neuronal differentiation at the LISN domain.

The protein localises to the cytoplasm. Its subcellular location is the microsome. It carries out the reaction S-adenosyl-L-homocysteine + H2O = L-homocysteine + adenosine. The protein operates within amino-acid biosynthesis; L-homocysteine biosynthesis; L-homocysteine from S-adenosyl-L-homocysteine: step 1/1. Functionally, may regulate the electrogenic sodium/bicarbonate cotransporter SLC4A4 activity and Mg(2+)-sensitivity. On the contrary of its homolog AHCYL1, does not regulate ITPR1 sensitivity to inositol 1,4,5-trisphosphate. The chain is Adenosylhomocysteinase 3 (AHCYL2) from Homo sapiens (Human).